The chain runs to 374 residues: Lipoyl synthase, mitochondrial (374 aa).

Residues 1 to 19 (MHSRSALLYRFLRPASRCF) constitute a mitochondrion transit peptide. The [4Fe-4S] cluster site is built by cysteine 103, cysteine 108, cysteine 114, cysteine 134, cysteine 138, cysteine 141, and serine 350. The region spanning 119-339 (ETGTATATIM…RLLGMEMGFR (221 aa)) is the Radical SAM core domain.

This sequence belongs to the radical SAM superfamily. Lipoyl synthase family. The cofactor is [4Fe-4S] cluster. Expressed in leaves and flowers, but not in roots. Expressed in roots, rosette leaves, cauline leaves, stems, flowers and siliques.

The protein localises to the mitochondrion. It carries out the reaction [[Fe-S] cluster scaffold protein carrying a second [4Fe-4S](2+) cluster] + N(6)-octanoyl-L-lysyl-[protein] + 2 oxidized [2Fe-2S]-[ferredoxin] + 2 S-adenosyl-L-methionine + 4 H(+) = [[Fe-S] cluster scaffold protein] + N(6)-[(R)-dihydrolipoyl]-L-lysyl-[protein] + 4 Fe(3+) + 2 hydrogen sulfide + 2 5'-deoxyadenosine + 2 L-methionine + 2 reduced [2Fe-2S]-[ferredoxin]. It participates in protein modification; protein lipoylation via endogenous pathway; protein N(6)-(lipoyl)lysine from octanoyl-[acyl-carrier-protein]: step 2/2. Catalyzes the radical-mediated insertion of two sulfur atoms into the C-6 and C-8 positions of the octanoyl moiety bound to the lipoyl domains of lipoate-dependent enzymes, thereby converting the octanoylated domains into lipoylated derivatives. Together with LIP2 is essential for mitochondrial protein lipoylation during seed development. Required for the lipoylation of mitochondrial pyruvate dehydrogenase component E2 proteins in leaves and roots. This Arabidopsis thaliana (Mouse-ear cress) protein is Lipoyl synthase, mitochondrial.